A 237-amino-acid chain; its full sequence is Probable transcriptional regulatory protein Bpro_2928 (237 aa).

This sequence belongs to the TACO1 family.

Its subcellular location is the cytoplasm. The chain is Probable transcriptional regulatory protein Bpro_2928 from Polaromonas sp. (strain JS666 / ATCC BAA-500).